Reading from the N-terminus, the 101-residue chain is MDKSKRPFRKSKRSFRRRLPPIGSGDRIDYRNMSLISRFISEQGKILSRRVNRLTLKQQRLITIAIKQARILSSLPFLNNEKQFERTESTPRTAGPKTRNK.

A compositionally biased stretch (basic residues) spans 1–19 (MDKSKRPFRKSKRSFRRRL). 2 disordered regions span residues 1–23 (MDKSKRPFRKSKRSFRRRLPPIG) and 82–101 (KQFERTESTPRTAGPKTRNK).

It belongs to the bacterial ribosomal protein bS18 family. Part of the 30S ribosomal subunit.

It is found in the plastid. Its subcellular location is the chloroplast. This Drimys granadensis protein is Small ribosomal subunit protein bS18c.